The chain runs to 649 residues: DNA mismatch repair protein MutL (649 aa).

Residues 339-414 (KKKTKDESVQ…VREEESWQST (76 aa)) are disordered. Positions 342 to 360 (TKDESVQEQFHFEHTKPKE) are enriched in basic and acidic residues. A compositionally biased stretch (low complexity) spans 388-402 (PQLWQQPKQEWQPPQ).

Belongs to the DNA mismatch repair MutL/HexB family.

Functionally, this protein is involved in the repair of mismatches in DNA. It is required for dam-dependent methyl-directed DNA mismatch repair. May act as a 'molecular matchmaker', a protein that promotes the formation of a stable complex between two or more DNA-binding proteins in an ATP-dependent manner without itself being part of a final effector complex. In Bacillus cytotoxicus (strain DSM 22905 / CIP 110041 / 391-98 / NVH 391-98), this protein is DNA mismatch repair protein MutL.